The following is a 282-amino-acid chain: Cell division protein FtsQ (282 aa).

At 1 to 30 (MINIGPPKKRRLRRKGNRFKKTRRVIPWRR) the chain is on the cytoplasmic side. A helical membrane pass occupies residues 31–51 (LMIGALWGTMALASLGMVVAV). At 52 to 282 (ACFAGQMLFA…LDAGELRGKG (231 aa)) the chain is on the periplasmic side. Positions 65–133 (FKVERIQVEN…DQLVIRVDER (69 aa)) constitute a POTRA domain.

The protein belongs to the FtsQ/DivIB family. FtsQ subfamily.

It is found in the cell inner membrane. Its function is as follows. Essential cell division protein. The sequence is that of Cell division protein FtsQ from Syntrophotalea carbinolica (strain DSM 2380 / NBRC 103641 / GraBd1) (Pelobacter carbinolicus).